The sequence spans 240 residues: DUP240 protein DFP1 (240 aa).

The interval 1–29 (MQPYLKKNTHATDDPKASPLKEGSPDNPE) is disordered. Helical transmembrane passes span 61 to 81 (IMINFLLFVVTILATLTDIWF) and 84 to 104 (VLSPAMVIRICLGGSMVVLQI).

The protein belongs to the DUP/COS family.

Its subcellular location is the membrane. This chain is DUP240 protein DFP1, found in Saccharomyces cerevisiae (Baker's yeast).